A 752-amino-acid polypeptide reads, in one-letter code: Multifunctional tryptophan biosynthesis protein (752 aa).

A Glutamine amidotransferase type-1 domain is found at 23–223; the sequence is NVILIDNYDS…LELTAGTWDN (201 aa). An L-glutamine-binding site is contributed by 74 to 76; the sequence is GPG. Residue Cys102 is the Nucleophile; for GATase activity of the active site. Residues Gln106 and 152-153 contribute to the L-glutamine site; that span reads SL. Active-site for GATase activity residues include His197 and Glu199. The segment at 239 to 503 is indole-3-glycerol phosphate synthase; that stretch reads ILDKIYAHRK…DTSAFVAQLL (265 aa). The interval 519–752 is N-(5'-phosphoribosyl)anthranilate isomerase; the sequence is LVKICGTRTE…FVKSAKSIRQ (234 aa).

It carries out the reaction N-(5-phospho-beta-D-ribosyl)anthranilate = 1-(2-carboxyphenylamino)-1-deoxy-D-ribulose 5-phosphate. The enzyme catalyses 1-(2-carboxyphenylamino)-1-deoxy-D-ribulose 5-phosphate + H(+) = (1S,2R)-1-C-(indol-3-yl)glycerol 3-phosphate + CO2 + H2O. It catalyses the reaction chorismate + L-glutamine = anthranilate + pyruvate + L-glutamate + H(+). It participates in amino-acid biosynthesis; L-tryptophan biosynthesis; L-tryptophan from chorismate: step 1/5. Its pathway is amino-acid biosynthesis; L-tryptophan biosynthesis; L-tryptophan from chorismate: step 3/5. The protein operates within amino-acid biosynthesis; L-tryptophan biosynthesis; L-tryptophan from chorismate: step 4/5. In terms of biological role, trifunctional enzyme bearing the Gln amidotransferase (GATase) domain of anthranilate synthase, indole-glycerolphosphate synthase, and phosphoribosylanthranilate isomerase activities. This is Multifunctional tryptophan biosynthesis protein (trpC) from Penicillium chrysogenum (Penicillium notatum).